A 125-amino-acid polypeptide reads, in one-letter code: Holo-[acyl-carrier-protein] synthase (125 aa).

Residues Asp8 and Glu57 each contribute to the Mg(2+) site.

This sequence belongs to the P-Pant transferase superfamily. AcpS family. The cofactor is Mg(2+).

The protein resides in the cytoplasm. The catalysed reaction is apo-[ACP] + CoA = holo-[ACP] + adenosine 3',5'-bisphosphate + H(+). Transfers the 4'-phosphopantetheine moiety from coenzyme A to a Ser of acyl-carrier-protein. The sequence is that of Holo-[acyl-carrier-protein] synthase from Neisseria gonorrhoeae (strain ATCC 700825 / FA 1090).